Here is a 144-residue protein sequence, read N- to C-terminus: Probable DNA-directed RNA polymerases I and III subunit RPAC2 (144 aa).

The disordered stretch occupies residues 14–47 (KVEAETMEVDEQPQETPQVDDEEDLNVPSKKKME). Residues 18 to 38 (ETMEVDEQPQETPQVDDEEDL) show a composition bias toward acidic residues.

This sequence belongs to the archaeal Rpo11/eukaryotic RPB11/RPC19 RNA polymerase subunit family. Component of the RNA polymerase I (Pol I) and RNA polymerase III (Pol III) complexes consisting of at least 13 and 17 subunits, respectively.

The protein localises to the nucleus. Its function is as follows. DNA-dependent RNA polymerase catalyzes the transcription of DNA into RNA using the four ribonucleoside triphosphates as substrates. Common core component of RNA polymerases I and III which synthesize ribosomal RNA precursors and small RNAs, such as 5S rRNA and tRNAs, respectively. The sequence is that of Probable DNA-directed RNA polymerases I and III subunit RPAC2 (rpac-19) from Caenorhabditis elegans.